Consider the following 127-residue polypeptide: Fluoride-specific ion channel FluC (127 aa).

The next 4 membrane-spanning stretches (helical) occupy residues Ser4–Leu24, Gly36–Ala56, Leu68–Val88, and Ala99–Phe119. Na(+)-binding residues include Gly75 and Thr78.

Belongs to the fluoride channel Fluc/FEX (TC 1.A.43) family.

It is found in the cell inner membrane. The enzyme catalyses fluoride(in) = fluoride(out). With respect to regulation, na(+) is not transported, but it plays an essential structural role and its presence is essential for fluoride channel function. Its function is as follows. Fluoride-specific ion channel. Important for reducing fluoride concentration in the cell, thus reducing its toxicity. The sequence is that of Fluoride-specific ion channel FluC from Pseudomonas aeruginosa (strain UCBPP-PA14).